Here is a 136-residue protein sequence, read N- to C-terminus: ATP synthase epsilon chain (136 aa).

It belongs to the ATPase epsilon chain family. In terms of assembly, F-type ATPases have 2 components, CF(1) - the catalytic core - and CF(0) - the membrane proton channel. CF(1) has five subunits: alpha(3), beta(3), gamma(1), delta(1), epsilon(1). CF(0) has three main subunits: a, b and c.

The protein localises to the cellular thylakoid membrane. Produces ATP from ADP in the presence of a proton gradient across the membrane. This is ATP synthase epsilon chain (atpC) from Prochloron didemni.